The following is a 376-amino-acid chain: MTQANNHANNHAMNIGVFIPIGNNGWLLSENAPQYMPSFELNKQITLKAEQYGLDFALSMIKLRGFGGKTEFWDHNLESFTLMAGLAAVTSRIKLYATAPTLCLPPAIVARMASTIDSISNGRFGLNLVTGWQRPEYSQMGLWPGDEYFGRRYAYLSEYAQVLRDLWETGSSDLKGEFFQMEDCRLSPRPQAEMKIICAGQSAAGMAFTATYADYNFCFGKGVNTPTAFAPTVERLEEAKAKTGRDVSSYVLFMIISDETDEAARAKWEHYKAGADQEAIAWLGLQGAADTKSGADTNIRQMADPTSAVNINMGTLVGSYATVAALLDEVVTVPGTGGVLLVFDDFLKGLDDFGTKIQPLMASRRHVTGEALAEVA.

FMN contacts are provided by residues 61 to 62 (IK), N127, E136, 152 to 153 (RY), and S202.

Belongs to the NtaA/SnaA/DszA monooxygenase family. RutA subfamily.

It carries out the reaction uracil + FMNH2 + NADH + O2 = (Z)-3-ureidoacrylate + FMN + NAD(+) + H2O + H(+). It catalyses the reaction thymine + FMNH2 + NADH + O2 = (Z)-2-methylureidoacrylate + FMN + NAD(+) + H2O + H(+). In terms of biological role, catalyzes the pyrimidine ring opening between N-3 and C-4 by an unusual flavin hydroperoxide-catalyzed mechanism, adding oxygen atoms in the process to yield ureidoacrylate peracid, that immediately reacts with FMN forming ureidoacrylate and FMN-N(5)-oxide. The FMN-N(5)-oxide reacts spontaneously with NADH to produce FMN. Requires the flavin reductase RutF to regenerate FMN in vivo. The chain is Pyrimidine monooxygenase RutA from Methylorubrum populi (strain ATCC BAA-705 / NCIMB 13946 / BJ001) (Methylobacterium populi).